Here is a 264-residue protein sequence, read N- to C-terminus: Hemin import ATP-binding protein HmuV (264 aa).

Positions 2-241 constitute an ABC transporter domain; that stretch reads IEVSGVSVRL…ETMLAVFGCA (240 aa). 34 to 41 serves as a coordination point for ATP; sequence GPNGSGKT.

It belongs to the ABC transporter superfamily. Heme (hemin) importer (TC 3.A.1.14.5) family. The complex is composed of two ATP-binding proteins (HmuV), two transmembrane proteins (HmuU) and a solute-binding protein (HmuT).

The protein resides in the cell inner membrane. Part of the ABC transporter complex HmuTUV involved in hemin import. Responsible for energy coupling to the transport system. This Rhizobium johnstonii (strain DSM 114642 / LMG 32736 / 3841) (Rhizobium leguminosarum bv. viciae) protein is Hemin import ATP-binding protein HmuV.